The following is a 339-amino-acid chain: AB hydrolase superfamily protein B1A11.02 (339 aa).

The protein belongs to the AB hydrolase superfamily.

This chain is AB hydrolase superfamily protein B1A11.02, found in Schizosaccharomyces pombe (strain 972 / ATCC 24843) (Fission yeast).